The primary structure comprises 608 residues: Dolichyl-diphosphooligosaccharide--protein glycosyltransferase subunit 1 (608 aa).

An N-terminal signal peptide occupies residues 1–25; that stretch reads MESPVALLLLLLLCLGALAPTPGSA. Residues 26–440 lie on the Lumenal side of the membrane; the sequence is SSEAPPLVNE…FNKVLMLQEP (415 aa). Lys-188 is modified (N6-acetyllysine). Residue Asn-300 is glycosylated (N-linked (GlcNAc...) asparagine). A helical membrane pass occupies residues 441-458; the sequence is LLVVAAFYILFFTVIIYV. Over 459 to 608 the chain is Cytoplasmic; it reads RLDFSITKDP…TKIDHILDAL (150 aa). The residue at position 539 (Lys-539) is an N6-acetyllysine; alternate. A Glycyl lysine isopeptide (Lys-Gly) (interchain with G-Cter in SUMO2); alternate cross-link involves residue Lys-539.

The protein belongs to the OST1 family. As to quaternary structure, component of the oligosaccharyltransferase (OST) complex. OST exists in two different complex forms which contain common core subunits RPN1, RPN2, OST48, OST4, DAD1 and TMEM258, either STT3A or STT3B as catalytic subunits, and form-specific accessory subunits. STT3A complex assembly occurs through the formation of 3 subcomplexes. Subcomplex 1 contains RPN1 and TMEM258, subcomplex 2 contains the STT3A-specific subunits STT3A, DC2/OSTC, and KCP2 as well as the core subunit OST4, and subcomplex 3 contains RPN2, DAD1, and OST48. The STT3A complex can form stable complexes with the Sec61 complex or with both the Sec61 and TRAP complexes. Interacts with TMEM35A/NACHO. In terms of processing, ubiquitinated by the ECS(ASB11) complex. Ubiquitinated by RNF128, leading to degradation in a proteasome/lysosome-dependent manner. Ufmylated by UFL1 in response to endoplasmic reticulum stress, promoting reticulophagy of endoplasmic reticulum sheets.

It localises to the endoplasmic reticulum membrane. Its pathway is protein modification; protein glycosylation. Its function is as follows. Subunit of the oligosaccharyl transferase (OST) complex that catalyzes the initial transfer of a defined glycan (Glc(3)Man(9)GlcNAc(2) in eukaryotes) from the lipid carrier dolichol-pyrophosphate to an asparagine residue within an Asn-X-Ser/Thr consensus motif in nascent polypeptide chains, the first step in protein N-glycosylation. N-glycosylation occurs cotranslationally and the complex associates with the Sec61 complex at the channel-forming translocon complex that mediates protein translocation across the endoplasmic reticulum (ER). All subunits are required for a maximal enzyme activity. The sequence is that of Dolichyl-diphosphooligosaccharide--protein glycosyltransferase subunit 1 from Mus musculus (Mouse).